The chain runs to 510 residues: Putative serine protease K12H4.7 (510 aa).

The first 19 residues, 1 to 19 (MKTLLAVLLAACVLTQVLS), serve as a signal peptide directing secretion. Residue Ser187 is the Charge relay system of the active site. Asn234 is a glycosylation site (N-linked (GlcNAc...) asparagine). Catalysis depends on Asp452, which acts as the Charge relay system. Residue Asn473 is glycosylated (N-linked (GlcNAc...) asparagine). The active-site Charge relay system is the His477.

It belongs to the peptidase S28 family.

The chain is Putative serine protease K12H4.7 from Caenorhabditis elegans.